Reading from the N-terminus, the 576-residue chain is SNF1-like protein kinase ssp2 (576 aa).

One can recognise a Protein kinase domain in the interval 34 to 285; it reads YIIRETLGEG…IQEIRRDPWF (252 aa). ATP is bound by residues 40–48 and Lys63; that span reads LGEGSFGKV. Catalysis depends on Asp156, which acts as the Proton acceptor. The residue at position 189 (Thr189) is a Phosphothreonine. The segment at 292-348 is auto-inhibitory domain (AID); that stretch reads YLRPMEEVQGSYADSRIVSKLGEAMGFSEDYIVEALRSDENNEVKEAYNLLHENQVI. A UBA domain is found at 304-345; the sequence is ADSRIVSKLGEAMGFSEDYIVEALRSDENNEVKEAYNLLHEN. Ser442 carries the phosphoserine modification.

It belongs to the protein kinase superfamily. CAMK Ser/Thr protein kinase family. SNF1 subfamily. As to quaternary structure, component of the AMP-activated protein kinase complex also known as the SNF1 kinase complex (Snf1c), a heterotrimeric complex composed of a catalytic subunit alpha and 2 regulatory subunits beta (amk2) and gamma (cbs2). In terms of processing, phosphorylation at Thr-189 by ssp1 is required for nuclear entry in nutritionally stressed cells.

The protein resides in the cytoplasm. The protein localises to the nucleus. The catalysed reaction is L-seryl-[protein] + ATP = O-phospho-L-seryl-[protein] + ADP + H(+). The enzyme catalyses L-threonyl-[protein] + ATP = O-phospho-L-threonyl-[protein] + ADP + H(+). Serine/threonine protein kinase essential for release from glucose repression via the phosphorylation of scr1 upon glucose deprivation. Catalytic subunit of the AMP-activated protein kinase complex also known as the SNF1 kinase complex (Snf1c), a central regulator of cellular energy homeostasis, which, in response to a fall in intracellular ATP levels, activates energy-producing pathways and inhibits energy-consuming processes. The complex phosphorylates histone H3 to form H3S10ph, which promotes H3K14ac formation, leading to transcriptional activation through TBP recruitment to the promoters. Regulates proper cell cycle exit and sexual differentiation. Also regulates ste11 levels under nitrogen deprivation. The chain is SNF1-like protein kinase ssp2 from Schizosaccharomyces pombe (strain 972 / ATCC 24843) (Fission yeast).